Here is a 283-residue protein sequence, read N- to C-terminus: 4-diphosphocytidyl-2-C-methyl-D-erythritol kinase (283 aa).

Lysine 12 is an active-site residue. ATP is bound at residue 94 to 104 (PAQAGLGGGSS). Residue aspartate 136 is part of the active site.

This sequence belongs to the GHMP kinase family. IspE subfamily.

It catalyses the reaction 4-CDP-2-C-methyl-D-erythritol + ATP = 4-CDP-2-C-methyl-D-erythritol 2-phosphate + ADP + H(+). The protein operates within isoprenoid biosynthesis; isopentenyl diphosphate biosynthesis via DXP pathway; isopentenyl diphosphate from 1-deoxy-D-xylulose 5-phosphate: step 3/6. Functionally, catalyzes the phosphorylation of the position 2 hydroxy group of 4-diphosphocytidyl-2C-methyl-D-erythritol. In Acidovorax ebreus (strain TPSY) (Diaphorobacter sp. (strain TPSY)), this protein is 4-diphosphocytidyl-2-C-methyl-D-erythritol kinase.